The following is a 112-amino-acid chain: MKEKTTQLYEGAYVFSVTLSEEARRKALEKVTSGITNYGGEILKIHDQGRKKLAYTIRGAREGYYYLIYFTVVPGVIAELWKEYHLNEDLLRFLTLKTDAVKEVLEFASLPE.

Belongs to the bacterial ribosomal protein bS6 family.

In terms of biological role, binds together with bS18 to 16S ribosomal RNA. This is Small ribosomal subunit protein bS6 from Chlamydia abortus (strain DSM 27085 / S26/3) (Chlamydophila abortus).